The primary structure comprises 433 residues: Sulfhydrylase FUB7 (433 aa).

K211 is subject to N6-(pyridoxal phosphate)lysine.

This sequence belongs to the trans-sulfuration enzymes family. Requires pyridoxal 5'-phosphate as cofactor.

The protein operates within mycotoxin biosynthesis. Functionally, sulfhydrylase; part of the gene cluster that mediates the biosynthesis of fusaric acid, a mycotoxin with low to moderate toxicity to animals and humans, but with high phytotoxic properties. L-aspartate is suggested as fusaric acid amino acid precursor that is activated and further processed to O-acetyl-L-homoserine by cluster enzymes aspartate kinase FUB3 and homoserine O-acetyltransferase FUB5, as well as enzymes of the primary metabolism. The polyketide synthase (PKS) FUB1 generates the triketide trans-2-hexenal which is presumptively released by the hydrolase FUB4 and linked to the NRPS-bound amino acid precursor by NAD(P)-dependent dehydrogenase FUB6. FUB1, FUB4, and the non-canonical NRPS Fub8 may form an enzyme complex. Further processing of the NRPS-bound intermediate might be carried out by FUB6 and the sulfhydrylase FUB7, enabling a spontaneous electrocyclization to close the carbon backbone of fusaric acid. Dihydrofusaric acid is likely to be released via reduction by the thioester reductase (TR) domain of FUB8 whereupon the final oxidation to fusaric acid may (also) be performed by the FMN-dependent dehydrogenase FUB9. In Fusarium oxysporum f. sp. lycopersici (strain 4287 / CBS 123668 / FGSC 9935 / NRRL 34936) (Fusarium vascular wilt of tomato), this protein is Sulfhydrylase FUB7.